The following is a 321-amino-acid chain: uncharacterized protein (321 aa).

An HTH lacI-type domain is found at 1–56; the sequence is MANIKDIAEKAGVSVTTVSRVINNHPYVSEDKRKRVFEAMESLEYTRNIHAVHLSK. Residues 4-23 constitute a DNA-binding region (H-T-H motif); it reads IKDIAEKAGVSVTTVSRVIN.

This is an uncharacterized protein from Bacillus subtilis (strain 168).